The primary structure comprises 132 residues: Transcription antitermination protein NusB (132 aa).

It belongs to the NusB family.

In terms of biological role, involved in transcription antitermination. Required for transcription of ribosomal RNA (rRNA) genes. Binds specifically to the boxA antiterminator sequence of the ribosomal RNA (rrn) operons. In Sulfurimonas denitrificans (strain ATCC 33889 / DSM 1251) (Thiomicrospira denitrificans (strain ATCC 33889 / DSM 1251)), this protein is Transcription antitermination protein NusB.